A 200-amino-acid chain; its full sequence is Large ribosomal subunit protein uL4 (200 aa).

The interval 44–71 (AQKTRAEVSGGGKKPWRQKGTGRARAGS) is disordered.

This sequence belongs to the universal ribosomal protein uL4 family. Part of the 50S ribosomal subunit.

Its function is as follows. One of the primary rRNA binding proteins, this protein initially binds near the 5'-end of the 23S rRNA. It is important during the early stages of 50S assembly. It makes multiple contacts with different domains of the 23S rRNA in the assembled 50S subunit and ribosome. In terms of biological role, forms part of the polypeptide exit tunnel. The chain is Large ribosomal subunit protein uL4 from Psychrobacter sp. (strain PRwf-1).